The chain runs to 391 residues: Transmembrane protein 79 (391 aa).

The disordered stretch occupies residues methionine 1–aspartate 114. Topologically, residues methionine 1–serine 200 are cytoplasmic. The span at alanine 103 to aspartate 114 shows a compositional bias: basic and acidic residues. Residues valine 201–phenylalanine 221 traverse the membrane as a helical segment. Residues aspartate 222–glycine 240 lie on the Extracellular side of the membrane. Residues valine 241–phenylalanine 261 form a helical membrane-spanning segment. Over serine 262 to glutamine 279 the chain is Cytoplasmic. A helical transmembrane segment spans residues tyrosine 280 to threonine 300. Residues tyrosine 301–leucine 309 lie on the Extracellular side of the membrane. The helical transmembrane segment at leucine 310–valine 330 threads the bilayer. Topologically, residues glycine 331–tyrosine 339 are cytoplasmic. Residues glycine 340–valine 360 form a helical membrane-spanning segment. The Extracellular portion of the chain corresponds to glutamate 361–glycine 391.

Expressed in the epidermis of the skin. Expressed in epithelial cells of the outermost layer of the stratum granulosum (SG) and in hair follicles (at protein level).

The protein localises to the lysosome. It is found in the golgi apparatus. The protein resides in the trans-Golgi network. It localises to the membrane. In terms of biological role, contributes to the epidermal integrity and skin barrier function. Plays a role in the lamellar granule (LG) secretory system and in the stratum corneum (SC) epithelial cell formation. The chain is Transmembrane protein 79 (Tmem79) from Mus musculus (Mouse).